A 72-amino-acid chain; its full sequence is Translation initiation factor IF-1 (72 aa).

Residues Met-1–Lys-72 enclose the S1-like domain. Tyr-60 is subject to Phosphotyrosine.

The protein belongs to the IF-1 family. As to quaternary structure, component of the 30S ribosomal translation pre-initiation complex which assembles on the 30S ribosome in the order IF-2 and IF-3, IF-1 and N-formylmethionyl-tRNA(fMet); mRNA recruitment can occur at any time during PIC assembly.

The protein localises to the cytoplasm. One of the essential components for the initiation of protein synthesis. Stabilizes the binding of IF-2 and IF-3 on the 30S subunit to which N-formylmethionyl-tRNA(fMet) subsequently binds. Helps modulate mRNA selection, yielding the 30S pre-initiation complex (PIC). Upon addition of the 50S ribosomal subunit IF-1, IF-2 and IF-3 are released leaving the mature 70S translation initiation complex. The sequence is that of Translation initiation factor IF-1 from Bacillus licheniformis (strain ATCC 14580 / DSM 13 / JCM 2505 / CCUG 7422 / NBRC 12200 / NCIMB 9375 / NCTC 10341 / NRRL NRS-1264 / Gibson 46).